Here is a 457-residue protein sequence, read N- to C-terminus: Siroheme synthase (457 aa).

Residues 1-204 (MDHLPIFCQL…NDQKAITETT (204 aa)) form a precorrin-2 dehydrogenase /sirohydrochlorin ferrochelatase region. NAD(+) is bound by residues 22-23 (DV) and 43-44 (LA). Ser128 is subject to Phosphoserine. A uroporphyrinogen-III C-methyltransferase region spans residues 216 to 457 (GEVVLVGAGP…RDKLNWFSNH (242 aa)). An S-adenosyl-L-methionine-binding site is contributed by Pro225. The active-site Proton acceptor is the Asp248. Lys270 (proton donor) is an active-site residue. S-adenosyl-L-methionine-binding positions include 301–303 (GGD), Ile306, 331–332 (TA), Met382, and Gly411.

This sequence in the N-terminal section; belongs to the precorrin-2 dehydrogenase / sirohydrochlorin ferrochelatase family. The protein in the C-terminal section; belongs to the precorrin methyltransferase family.

The catalysed reaction is uroporphyrinogen III + 2 S-adenosyl-L-methionine = precorrin-2 + 2 S-adenosyl-L-homocysteine + H(+). It carries out the reaction precorrin-2 + NAD(+) = sirohydrochlorin + NADH + 2 H(+). The enzyme catalyses siroheme + 2 H(+) = sirohydrochlorin + Fe(2+). The protein operates within cofactor biosynthesis; adenosylcobalamin biosynthesis; precorrin-2 from uroporphyrinogen III: step 1/1. It functions in the pathway cofactor biosynthesis; adenosylcobalamin biosynthesis; sirohydrochlorin from precorrin-2: step 1/1. It participates in porphyrin-containing compound metabolism; siroheme biosynthesis; precorrin-2 from uroporphyrinogen III: step 1/1. Its pathway is porphyrin-containing compound metabolism; siroheme biosynthesis; siroheme from sirohydrochlorin: step 1/1. The protein operates within porphyrin-containing compound metabolism; siroheme biosynthesis; sirohydrochlorin from precorrin-2: step 1/1. Functionally, multifunctional enzyme that catalyzes the SAM-dependent methylations of uroporphyrinogen III at position C-2 and C-7 to form precorrin-2 via precorrin-1. Then it catalyzes the NAD-dependent ring dehydrogenation of precorrin-2 to yield sirohydrochlorin. Finally, it catalyzes the ferrochelation of sirohydrochlorin to yield siroheme. This chain is Siroheme synthase, found in Escherichia coli (strain 55989 / EAEC).